The chain runs to 144 residues: Protein CT_635 (144 aa).

Residues 110–144 are disordered; that stretch reads EVTNDIGHSSHKSPTPKKTKSSSQKKSKKKNWIPL. Residues 118–144 are compositionally biased toward basic residues; it reads SSHKSPTPKKTKSSSQKKSKKKNWIPL.

Belongs to the chlamydial CPn_0742/CT_635/TC_0003 family.

This chain is Protein CT_635, found in Chlamydia trachomatis serovar D (strain ATCC VR-885 / DSM 19411 / UW-3/Cx).